The following is a 695-amino-acid chain: MDLHSLLELGTKPTAPHVRNKKVILFDTNHQVSICNQIIDAINSGIDLGDLLEGGLLTLCVEHYYNSDKDKFNTSPVAKYLRDAGYEFDVIKNADATRFLDVSPNEPHYSPLILALKTLESTESQRGRIGLFLSFCSLFLPKLVVGDRASIEKALRQVTVHQEQGIVTYPNHWLTTGHMKVIFGILRSSFILKFVLIHQGVNLVTGHDAYDSIISNSVGQTRFSGLLIVKTVLEFILQKTDSGVTLHPLVRTSKVKNEVASFKQALSNLARHGEYAPFARVLNLSGINNLEHGLYPQLSAIALGVATAHGSTLAGVNVGEQYQQLREAAHDAEVKLQRRHEHQEIQAIAEDDEERKILEQFHLQKTEITHSQTLAVLSQKREKLARLAAEIENNIVEDQGFKQSQNRVSQSFLNDPTPVEVTVQARPMNRPTALPPPVDDKIEHESTEDSSSSSSFVDLNDPFALLNEDEDTLDDSVMIPGTTSREFQGIPEPPRQSQDLNNSQGKQEDESTNRIKKQFLRYQELPPVQEDDESEYTTDSQESIDQPGSDNEQGVDLPPPPLYAQEKRQDPIQHPAANPQDPFGSIGDVNGDILEPIRSPSSPSAPQEDTRMREAYELSPDFTNDEDNQQNWPQRVVTKKGRTFLYPNDLLQTNPPESLITALVEEYQNPVSAKELQADWPDMSFDERRHVAMNL.

Coiled coils occupy residues 316 to 341 (VNVG…RRHE) and 372 to 399 (QTLA…VEDQ). Residues 424-611 (QARPMNRPTA…SPSAPQEDTR (188 aa)) are disordered. Basic and acidic residues predominate over residues 438 to 447 (VDDKIEHEST). 2 stretches are compositionally biased toward polar residues: residues 495–505 (RQSQDLNNSQG) and 537–552 (TTDS…SDNE). The short motif at 603-606 (PSAP) is the PTAP/PSAP motif element.

Belongs to the filoviruses nucleoprotein family. As to quaternary structure, homooligomer. Homomultimerizes to form the nucleocapsid. Binds to viral genomic RNA. Interacts with VP35 and VP30 to form the nucleocapsid. Also interacts with VP24 and VP40. Post-translationally, phosphorylated.

Its subcellular location is the virion. The protein localises to the host cytoplasm. Encapsidates the genome, protecting it from nucleases. The encapsidated genomic RNA is termed the nucleocapsid and serves as template for transcription and replication. During replication, encapsidation by NP is coupled to RNA synthesis and all replicative products are resistant to nucleases. The chain is Nucleoprotein (NP) from Chlorocebus aethiops (Green monkey).